The primary structure comprises 404 residues: Interferon-activable protein 205-A (404 aa).

The Pyrin domain maps to Met-1–Glu-88. Residues Glu-85 to Pro-198 form a disordered region. 2 stretches are compositionally biased toward low complexity: residues Ala-102–Ser-112 and Thr-122–Ala-132. Residues Gly-137–Lys-147 are compositionally biased toward basic and acidic residues. A compositionally biased stretch (low complexity) spans Gln-168–Ala-185. A compositionally biased stretch (polar residues) spans Lys-186–Ile-197. Positions Pro-192–Thr-392 constitute an HIN-200 domain.

The protein belongs to the HIN-200 family.

The protein localises to the nucleus. May act as a transcriptional regulator in the myeloid lineage. Inhibits cell growth via p53/TP53 and RB1-dependent and independent pathways. This chain is Interferon-activable protein 205-A (Ifi205a), found in Mus musculus (Mouse).